The sequence spans 208 residues: MASKCPKCDKTVYFAEKVSSLGKDWHKFCLKCERCNKTLTPGGHAEHDGKPFCHKPCYATLFGPKGVNIGGAGSYIYEKPQTEAPQVTGPIEVPVVRTEERKTSGPPKGPSKASSVTTFTGEPNMCPRCNKRVYFAEKVTSLGKDWHRPCLRCERCSKTLTPGGHAEHDGQPYCHKPCYGILFGPKGVNTGAVGSYIYDKDPEGTVQP.

Positions 5–57 (CPKCDKTVYFAEKVSSLGKDWHKFCLKCERCNKTLTPGGHAEHDGKPFCHKPC) constitute an LIM zinc-binding 1 domain. Lys-23 carries the N6-acetyllysine modification. Ser-104 carries the post-translational modification Phosphoserine. An LIM zinc-binding 2 domain is found at 126-178 (CPRCNKRVYFAEKVTSLGKDWHRPCLRCERCSKTLTPGGHAEHDGQPYCHKPC). Lys-138 and Lys-144 each carry N6-acetyllysine.

As to quaternary structure, interacts with TGFB1I1.

In Mus musculus (Mouse), this protein is Cysteine-rich protein 2 (Crip2).